We begin with the raw amino-acid sequence, 230 residues long: Heptaprenylglyceryl phosphate synthase (230 aa).

K12 contributes to the sn-glycerol 1-phosphate binding site. Mg(2+) contacts are provided by D14 and T40. Sn-glycerol 1-phosphate is bound by residues 159–164, G189, and 209–210; these read YIEYSG and GD.

This sequence belongs to the GGGP/HepGP synthase family. Group I subfamily. Homodimer. It depends on Mg(2+) as a cofactor.

It catalyses the reaction sn-glycerol 1-phosphate + all-trans-heptaprenyl diphosphate = 3-heptaprenyl-sn-glycero-1-phosphate + diphosphate. It functions in the pathway membrane lipid metabolism; glycerophospholipid metabolism. In terms of biological role, prenyltransferase that catalyzes in vivo the transfer of the heptaprenyl moiety of heptaprenyl pyrophosphate (HepPP; 35 carbon atoms) to the C3 hydroxyl of sn-glycerol-1-phosphate (G1P), producing heptaprenylglyceryl phosphate (HepGP). This reaction is an ether-bond-formation step in the biosynthesis of archaea-type G1P-based membrane lipids found in Bacillales. To a much lesser extent, is also able to use geranylgeranyl diphosphate (GGPP; C20) as the prenyl donor. The protein is Heptaprenylglyceryl phosphate synthase of Staphylococcus aureus (strain NCTC 8325 / PS 47).